The sequence spans 173 residues: Co-chaperone protein HscB (173 aa).

The J domain maps to Asp2 to Leu74.

This sequence belongs to the HscB family. Interacts with HscA and stimulates its ATPase activity. Interacts with IscU.

Co-chaperone involved in the maturation of iron-sulfur cluster-containing proteins. Seems to help targeting proteins to be folded toward HscA. This chain is Co-chaperone protein HscB, found in Serratia proteamaculans (strain 568).